The chain runs to 254 residues: Alcohol dehydrogenase (254 aa).

10–33 contacts NAD(+); it reads FVAGLGGIGLDTSREIVKSGPKNL. Residue Ser-138 participates in substrate binding. Residue Tyr-151 is the Proton acceptor of the active site.

This sequence belongs to the short-chain dehydrogenases/reductases (SDR) family. In terms of assembly, homodimer.

The enzyme catalyses a primary alcohol + NAD(+) = an aldehyde + NADH + H(+). It catalyses the reaction a secondary alcohol + NAD(+) = a ketone + NADH + H(+). This chain is Alcohol dehydrogenase (Adh1), found in Drosophila lacicola (Fruit fly).